We begin with the raw amino-acid sequence, 241 residues long: Uridylate kinase (241 aa).

Residue 12–15 (KLSG) coordinates ATP. Residues 20-25 (GDKGTG) are involved in allosteric activation by GTP. Glycine 54 is a UMP binding site. Glycine 55 and arginine 59 together coordinate ATP. UMP is bound by residues aspartate 74 and 135–142 (TGSPYFST). Residues asparagine 163, tyrosine 169, and aspartate 172 each contribute to the ATP site.

This sequence belongs to the UMP kinase family. As to quaternary structure, homohexamer.

The protein resides in the cytoplasm. It carries out the reaction UMP + ATP = UDP + ADP. It functions in the pathway pyrimidine metabolism; CTP biosynthesis via de novo pathway; UDP from UMP (UMPK route): step 1/1. Its activity is regulated as follows. Allosterically activated by GTP. Inhibited by UTP. Functionally, catalyzes the reversible phosphorylation of UMP to UDP. This is Uridylate kinase from Pediococcus pentosaceus (strain ATCC 25745 / CCUG 21536 / LMG 10740 / 183-1w).